The primary structure comprises 509 residues: Aromatase (509 aa).

Residue cysteine 437 coordinates heme.

Belongs to the cytochrome P450 family. Heme is required as a cofactor.

The protein localises to the membrane. The enzyme catalyses testosterone + 3 reduced [NADPH--hemoprotein reductase] + 3 O2 = 17beta-estradiol + formate + 3 oxidized [NADPH--hemoprotein reductase] + 4 H2O + 4 H(+). The catalysed reaction is androst-4-ene-3,17-dione + 3 reduced [NADPH--hemoprotein reductase] + 3 O2 = estrone + formate + 3 oxidized [NADPH--hemoprotein reductase] + 4 H2O + 4 H(+). In terms of biological role, catalyzes the formation of aromatic C18 estrogens from C19 androgens. This chain is Aromatase (CYP19A1), found in Taeniopygia guttata (Zebra finch).